The primary structure comprises 177 residues: CASP-like protein 4D1 (177 aa).

The Cytoplasmic segment spans residues methionine 1–arginine 20. Residues methionine 21–methionine 41 form a helical membrane-spanning segment. Residues threonine 42–arginine 66 lie on the Extracellular side of the membrane. A helical transmembrane segment spans residues tyrosine 67–leucine 87. Residues asparagine 88–aspartate 107 are Cytoplasmic-facing. A helical transmembrane segment spans residues phenylalanine 108–alanine 128. At threonine 129 to serine 153 the chain is on the extracellular side. Residues leucine 154–proline 174 traverse the membrane as a helical segment. At lysine 175–valine 177 the chain is on the cytoplasmic side.

The protein belongs to the Casparian strip membrane proteins (CASP) family. In terms of assembly, homodimer and heterodimers.

It is found in the cell membrane. This Populus trichocarpa (Western balsam poplar) protein is CASP-like protein 4D1.